The following is a 112-amino-acid chain: Nucleoid-associated protein FTF0810c (112 aa).

The tract at residues methionine 1 to glutamate 27 is disordered. Positions glutamate 17 to glutamate 27 are enriched in basic and acidic residues.

Belongs to the YbaB/EbfC family. In terms of assembly, homodimer.

Its subcellular location is the cytoplasm. The protein localises to the nucleoid. Functionally, binds to DNA and alters its conformation. May be involved in regulation of gene expression, nucleoid organization and DNA protection. This chain is Nucleoid-associated protein FTF0810c, found in Francisella tularensis subsp. tularensis (strain FSC 198).